The chain runs to 467 residues: Methylenetetrahydrofolate--tRNA-(uracil-5-)-methyltransferase TrmFO (467 aa).

11 to 16 contacts FAD; it reads GAGLAG.

This sequence belongs to the MnmG family. TrmFO subfamily. FAD is required as a cofactor.

The protein localises to the cytoplasm. It catalyses the reaction uridine(54) in tRNA + (6R)-5,10-methylene-5,6,7,8-tetrahydrofolate + NADH + H(+) = 5-methyluridine(54) in tRNA + (6S)-5,6,7,8-tetrahydrofolate + NAD(+). The enzyme catalyses uridine(54) in tRNA + (6R)-5,10-methylene-5,6,7,8-tetrahydrofolate + NADPH + H(+) = 5-methyluridine(54) in tRNA + (6S)-5,6,7,8-tetrahydrofolate + NADP(+). In terms of biological role, catalyzes the folate-dependent formation of 5-methyl-uridine at position 54 (M-5-U54) in all tRNAs. This is Methylenetetrahydrofolate--tRNA-(uracil-5-)-methyltransferase TrmFO from Prochlorococcus marinus (strain MIT 9303).